Here is a 266-residue protein sequence, read N- to C-terminus: 2-dehydro-3-deoxy-D-gluconate/2-dehydro-3-deoxy-phosphogluconate aldolase (266 aa).

Residues 36–37 (ST), 123–125 (YNI), and 151–153 (KDS) contribute to the substrate site. Lysine 151 acts as the Schiff-base intermediate with substrate in catalysis.

The protein belongs to the DapA family. KDPG aldolase subfamily. As to quaternary structure, homotetramer; dimer of dimers.

It catalyses the reaction 2-dehydro-3-deoxy-6-phospho-D-gluconate = D-glyceraldehyde 3-phosphate + pyruvate. The catalysed reaction is 2-dehydro-3-deoxy-D-gluconate = D-glyceraldehyde + pyruvate. It carries out the reaction 2-dehydro-3-deoxy-6-phospho-D-galactonate = D-glyceraldehyde 3-phosphate + pyruvate. The enzyme catalyses 2-dehydro-3-deoxy-D-galactonate = D-glyceraldehyde + pyruvate. It functions in the pathway carbohydrate acid metabolism; 2-dehydro-3-deoxy-D-gluconate degradation; D-glyceraldehyde 3-phosphate and pyruvate from 2-dehydro-3-deoxy-D-gluconate: step 2/2. In terms of biological role, involved in the degradation of glucose via the Entner-Doudoroff pathway. Catalyzes the reversible cleavage of 2-keto-3-deoxy-6-phosphogluconate (KDPG) and 2-keto-3-deoxygluconate (KDG) forming pyruvate and glyceraldehyde 3-phosphate or glyceraldehyde, respectively. It is also able to catalyze the reversible cleavage of 2-keto-3-deoxy-6-phosphogalactonate (KDPGal) and 2-keto-3-deoxygalactonate (KDGal). It is equally active with both D- and L-glyceraldehyde. This chain is 2-dehydro-3-deoxy-D-gluconate/2-dehydro-3-deoxy-phosphogluconate aldolase, found in Picrophilus torridus (strain ATCC 700027 / DSM 9790 / JCM 10055 / NBRC 100828 / KAW 2/3).